The following is a 343-amino-acid chain: Protein SOSEKI 4 (343 aa).

Positions 18 to 109 are DIX-like oligomerization domain; the sequence is RIVPVVYYLS…YVLKGSQILD (92 aa). Residues 148 to 194 form a disordered region; it reads RKLSMDASTQTDDRRRRKSPVDEVNEVTELSREEITSPPQSDSSPET. Residues 184-194 are compositionally biased toward polar residues; that stretch reads SPPQSDSSPET. Positions 233-234 match the Association to cell membranes motif; that stretch reads CG.

The protein belongs to the SOSEKI family. Homodimer. Forms long polymer filaments with other SOKs proteins polymers (e.g. SOK1, SOK2, SOK3 and SOK4) crucial for polar localization and biological activity. Binds to ANGUSTIFOLIA (AN). As to expression, expressed during embryogenesis and in roots.

Its subcellular location is the cell membrane. Its function is as follows. SOSEKI proteins (SOK1-5) locally interpret global polarity cues and can influence cell division orientation to coordinate cell polarization relative to body axes, probably by guiding ANGUSTIFOLIA (AN) polarized localization. Positive regulator of auxin (indole-3-acetic acid, IAA) biosynthesis and signaling pathway leading to the modulation of seedling growth, plant and inflorescence development. Negative regulator of stress responses (e.g. salinity and osmotic stress). The chain is Protein SOSEKI 4 from Arabidopsis thaliana (Mouse-ear cress).